A 331-amino-acid polypeptide reads, in one-letter code: MQHRDNPEKAPLSDAPTVVEDRAADYRHASVLLDGAVEALMTDPDGCYLDGTFGRGGHSRAILQRLSPQGRLLAIDRDPAALAEGATWDDPRFTLRHGRFAELDDIARDAALHRRLSGVLLDVGVSSPQLDDASRGFSFLRDGPLDMRMDPTQGESAADWLARVSERDMSDVFKRYGEERFARRIAKAIVARRGERPITHTADLAELVKAAHPAWEKGKHPATRVFQAIRIHVNGELDQLEAALAAALESLAPGGRLVVISFHSLEDRLVKRFIRDKVRGDTHLPRDLPIRDTQLNRRLAMVGKARRPDEDEIALNPRARSAVMRVAQKLG.

S-adenosyl-L-methionine-binding positions include 56–58 (GGH), aspartate 76, phenylalanine 100, aspartate 122, and glutamine 129.

The protein belongs to the methyltransferase superfamily. RsmH family.

It is found in the cytoplasm. It catalyses the reaction cytidine(1402) in 16S rRNA + S-adenosyl-L-methionine = N(4)-methylcytidine(1402) in 16S rRNA + S-adenosyl-L-homocysteine + H(+). Its function is as follows. Specifically methylates the N4 position of cytidine in position 1402 (C1402) of 16S rRNA. The protein is Ribosomal RNA small subunit methyltransferase H of Chromohalobacter salexigens (strain ATCC BAA-138 / DSM 3043 / CIP 106854 / NCIMB 13768 / 1H11).